Reading from the N-terminus, the 130-residue chain is Small ribosomal subunit protein uS9 (130 aa).

It belongs to the universal ribosomal protein uS9 family.

This Edwardsiella ictaluri (strain 93-146) protein is Small ribosomal subunit protein uS9.